The primary structure comprises 338 residues: tRNA N6-adenosine threonylcarbamoyltransferase (338 aa).

Positions 111 and 115 each coordinate Fe cation. Substrate-binding positions include 134 to 138 (LVSGG), D167, G180, and N272. Residue D300 participates in Fe cation binding.

This sequence belongs to the KAE1 / TsaD family. Fe(2+) serves as cofactor.

It localises to the cytoplasm. The catalysed reaction is L-threonylcarbamoyladenylate + adenosine(37) in tRNA = N(6)-L-threonylcarbamoyladenosine(37) in tRNA + AMP + H(+). Its function is as follows. Required for the formation of a threonylcarbamoyl group on adenosine at position 37 (t(6)A37) in tRNAs that read codons beginning with adenine. Is involved in the transfer of the threonylcarbamoyl moiety of threonylcarbamoyl-AMP (TC-AMP) to the N6 group of A37, together with TsaE and TsaB. TsaD likely plays a direct catalytic role in this reaction. The protein is tRNA N6-adenosine threonylcarbamoyltransferase of Vibrio parahaemolyticus serotype O3:K6 (strain RIMD 2210633).